The following is a 248-amino-acid chain: ATP synthase subunit a, chloroplastic (248 aa).

5 consecutive transmembrane segments (helical) span residues 35–55, 94–114, 133–153, 202–222, and 224–244; these read GQVF…SFLG, VPYI…GALI, INTT…AGLS, VFTL…GLFA, and SIQA…AMEG.

This sequence belongs to the ATPase A chain family. F-type ATPases have 2 components, CF(1) - the catalytic core - and CF(0) - the membrane proton channel. CF(1) has five subunits: alpha(3), beta(3), gamma(1), delta(1), epsilon(1). CF(0) has four main subunits: a, b, b' and c.

It localises to the plastid. The protein resides in the chloroplast thylakoid membrane. In terms of biological role, key component of the proton channel; it plays a direct role in the translocation of protons across the membrane. In Porphyra purpurea (Red seaweed), this protein is ATP synthase subunit a, chloroplastic.